Consider the following 356-residue polypeptide: Photosynthetic reaction center cytochrome c subunit (356 aa).

The N-terminal stretch at 1 to 20 is a signal peptide; sequence MKQLIVNSVATVALASLVAG. Residue cysteine 21 is the site of S-diacylglycerol cysteine attachment. Residues methionine 94, cysteine 107, cysteine 110, histidine 111, methionine 130, histidine 144, cysteine 152, cysteine 155, histidine 156, methionine 253, cysteine 264, cysteine 267, histidine 268, cysteine 325, cysteine 328, and histidine 329 each coordinate heme.

As to quaternary structure, component of the photosynthetic reaction center composed of protein subunits L (PufL), M (PufM), H (PuhA) and cytochrome C (PufC). In terms of processing, binds 4 heme groups per subunit. Post-translationally, after the signal sequence is removed, the N-terminal cysteine is modified to form a diacylglyceride thioether, but the alpha-amino group is free and is not N-palmitoylated.

It localises to the cellular chromatophore membrane. The reaction center of purple bacteria contains a tightly bound cytochrome molecule which re-reduces the photo oxidized primary electron donor. This Blastochloris viridis (Rhodopseudomonas viridis) protein is Photosynthetic reaction center cytochrome c subunit.